Consider the following 492-residue polypeptide: METIALLAALFFIALTCFLTSGRRRNLPPGPYPLPIIGNMLQLGSNPHQSFAQLSKKYGPLMSIHLGSLYTVIVSSPEMAKEILHKHGQAFSGRTIAQAVHACDHDKISMGFLPVTSVWRDLRKICKEQMFSHQSLEASEGLRHQKLQQLLDYAQKCCETGRAVDIREASFITTLNLMSATMFSTQATEFESEATKEFKEIIEGVATIVGVPNFADYFPILKPFDLQGIKRQADGYFGRLLKKIEGYLNERVESRRLNPDAPRKNDFLETVVDIIEADEYKLTTDHLTHLMLDLFVGGSETNTTSLEWIMSELVINPDKMAKVKDEIKSVVGDKKIVDESEMPRLPYLQAAIKEVLRIHPPGPLLLPRRAEIDQEVNGYLIPKGTQILFNAWAIGRDPSIWKNPESFEPERFLDQTVDFKGQDFELIPFGSGRRICPGMPLANRILHMTTATLVHNFDWKLEEETANADHQDELFGLAVRRAVPLKIIPLRP.

The helical transmembrane segment at 1 to 21 (METIALLAALFFIALTCFLTS) threads the bilayer. The Cytoplasmic portion of the chain corresponds to 22 to 492 (GRRRNLPPGP…VPLKIIPLRP (471 aa)). C436 serves as a coordination point for heme.

The protein belongs to the cytochrome P450 family. Requires heme as cofactor.

The protein resides in the endoplasmic reticulum membrane. The catalysed reaction is abieta-8,11,13-triene + reduced [NADPH--hemoprotein reductase] + O2 = ferruginol + oxidized [NADPH--hemoprotein reductase] + H2O + H(+). It participates in secondary metabolite biosynthesis; terpenoid biosynthesis. Cytochrome P450 enzyme (CYP) which catalyzes a unique two-electron oxidation cascade on abieta-8,11,13-triene to produce ferruginol, an intermediate in tanshinone biosynthesis. The sequence is that of Ferruginol synthase from Isodon rubescens (Rabdosia rubescens).